Here is a 349-residue protein sequence, read N- to C-terminus: Small ribosomal subunit biogenesis GTPase RsgA (349 aa).

The span at 1 to 11 shows a compositional bias: basic residues; the sequence is MSKKKLSKGQQ. Positions 1-29 are disordered; it reads MSKKKLSKGQQRRVSANHQRRLKKTESKV. One can recognise a CP-type G domain in the interval 102–272; sequence HSVLTRPDYY…VIDSPGVREF (171 aa). Residues 158-161 and 212-220 each bind GTP; these read NKID and GQSGVGKSS. Zn(2+) is bound by residues Cys-296, Cys-301, His-303, and Cys-309.

It belongs to the TRAFAC class YlqF/YawG GTPase family. RsgA subfamily. In terms of assembly, monomer. Associates with 30S ribosomal subunit, binds 16S rRNA. Requires Zn(2+) as cofactor.

The protein resides in the cytoplasm. One of several proteins that assist in the late maturation steps of the functional core of the 30S ribosomal subunit. Helps release RbfA from mature subunits. May play a role in the assembly of ribosomal proteins into the subunit. Circularly permuted GTPase that catalyzes slow GTP hydrolysis, GTPase activity is stimulated by the 30S ribosomal subunit. The polypeptide is Small ribosomal subunit biogenesis GTPase RsgA (Pectobacterium carotovorum subsp. carotovorum (strain PC1)).